Reading from the N-terminus, the 75-residue chain is Small ribosomal subunit protein bS16 (75 aa).

This sequence belongs to the bacterial ribosomal protein bS16 family.

This is Small ribosomal subunit protein bS16 from Campylobacter lari (strain RM2100 / D67 / ATCC BAA-1060).